A 256-amino-acid chain; its full sequence is Small ribosomal subunit protein eS1 (256 aa).

Over residues 1-18 the composition is skewed to basic residues; sequence MAVGKNKRLSKGKKGIKK. The segment at 1–20 is disordered; that stretch reads MAVGKNKRLSKGKKGIKKRT. Alanine 2 is subject to N-acetylalanine; partial.

This sequence belongs to the eukaryotic ribosomal protein eS1 family. As to quaternary structure, component of the small ribosomal subunit. Mature ribosomes consist of a small (40S) and a large (60S) subunit. The 40S subunit contains about 33 different proteins and 1 molecule of RNA (18S). The 60S subunit contains about 49 different proteins and 3 molecules of RNA (25S, 5.8S and 5S).

The protein localises to the cytoplasm. This Emericella nidulans (strain FGSC A4 / ATCC 38163 / CBS 112.46 / NRRL 194 / M139) (Aspergillus nidulans) protein is Small ribosomal subunit protein eS1 (rps1).